A 91-amino-acid polypeptide reads, in one-letter code: Small ribosomal subunit protein uS19 (91 aa).

This sequence belongs to the universal ribosomal protein uS19 family.

Its function is as follows. Protein S19 forms a complex with S13 that binds strongly to the 16S ribosomal RNA. The sequence is that of Small ribosomal subunit protein uS19 from Erythrobacter litoralis (strain HTCC2594).